The following is a 258-amino-acid chain: 6-phosphogluconolactonase (258 aa).

Ala2 is subject to N-acetylalanine. A Phosphoserine modification is found at Ser49. N6-acetyllysine is present on Lys180.

This sequence belongs to the glucosamine/galactosamine-6-phosphate isomerase family. 6-phosphogluconolactonase subfamily.

Its subcellular location is the cytoplasm. It carries out the reaction 6-phospho-D-glucono-1,5-lactone + H2O = 6-phospho-D-gluconate + H(+). The protein operates within carbohydrate degradation; pentose phosphate pathway; D-ribulose 5-phosphate from D-glucose 6-phosphate (oxidative stage): step 2/3. Its function is as follows. Hydrolysis of 6-phosphogluconolactone to 6-phosphogluconate. This chain is 6-phosphogluconolactonase (PGLS), found in Bos taurus (Bovine).